Here is a 398-residue protein sequence, read N- to C-terminus: Minor cardiolipin synthase ClsB (398 aa).

The chain crosses the membrane as a helical span at residues 3–23 (VFIVIMIIVVIFFALILLDIF). PLD phosphodiesterase domains are found at residues 141–168 (MQKR…AEEY) and 311–338 (YQGF…DKRS).

The protein belongs to the phospholipase D family. Cardiolipin synthase subfamily.

It is found in the cell membrane. In terms of biological role, involved in the biosynthesis of cardiolipin. The chain is Minor cardiolipin synthase ClsB (clsB) from Bacillus subtilis (strain 168).